The following is a 190-amino-acid chain: MATSEAPINLTNQFLIAMPGMADPTFSGSVVYLCEHNERGALGLVINRPIDIDMATLFDKIDLKLEIQPVAHQPVYFGGPVQTERGFVLHDPVGIYVSSLAVPGGLEMTTSKDVLEAVANGSGPHRFLLTLGYAGWGAGQLEDELSRNGWLTVQADPEIIFSVPPEERFAAAIRLLGIDISMLSGDAGHA.

This sequence belongs to the UPF0301 (AlgH) family.

The polypeptide is UPF0301 protein Rmet_2743 (Cupriavidus metallidurans (strain ATCC 43123 / DSM 2839 / NBRC 102507 / CH34) (Ralstonia metallidurans)).